We begin with the raw amino-acid sequence, 219 residues long: 16S rRNA (adenine(1408)-N(1))-methyltransferase (219 aa).

S-adenosyl-L-methionine-binding positions include glycine 32, asparagine 38, aspartate 55, 87 to 88 (AE), 104 to 109 (LFPWGT), and 195 to 197 (SLW).

Belongs to the methyltransferase superfamily. Kanamycin-apramycin resistance family.

The catalysed reaction is adenosine(1408) in 16S rRNA + S-adenosyl-L-methionine = N(1)-methyladenosine(1408) in 16S rRNA + S-adenosyl-L-homocysteine + H(+). Its function is as follows. Specifically methylates the N(1) position of adenine 1408 in 16S rRNA. Confers resistance to various aminoglycosides, including kanamycin, neomycin, apramycin, ribostamycin and gentamicin. Methylates only fully assembled 30S subunits. This is 16S rRNA (adenine(1408)-N(1))-methyltransferase (npmA) from Escherichia coli.